Here is a 116-residue protein sequence, read N- to C-terminus: Large ribosomal subunit protein uL18 (116 aa).

It belongs to the universal ribosomal protein uL18 family. As to quaternary structure, part of the 50S ribosomal subunit; part of the 5S rRNA/L5/L18/L25 subcomplex. Contacts the 5S and 23S rRNAs.

In terms of biological role, this is one of the proteins that bind and probably mediate the attachment of the 5S RNA into the large ribosomal subunit, where it forms part of the central protuberance. The sequence is that of Large ribosomal subunit protein uL18 from Shewanella baltica (strain OS223).